Consider the following 521-residue polypeptide: Glutamate--tRNA ligase (521 aa).

A 'HIGH' region motif is present at residues 13–23; that stretch reads PSPSGFLHVGG. Positions 253 to 257 match the 'KMSKS' region motif; it reads KLSKR. ATP is bound at residue K256.

This sequence belongs to the class-I aminoacyl-tRNA synthetase family. Glutamate--tRNA ligase type 1 subfamily. As to quaternary structure, monomer.

It localises to the cytoplasm. It carries out the reaction tRNA(Glu) + L-glutamate + ATP = L-glutamyl-tRNA(Glu) + AMP + diphosphate. Its function is as follows. Catalyzes the attachment of glutamate to tRNA(Glu) in a two-step reaction: glutamate is first activated by ATP to form Glu-AMP and then transferred to the acceptor end of tRNA(Glu). This Leptospira interrogans serogroup Icterohaemorrhagiae serovar copenhageni (strain Fiocruz L1-130) protein is Glutamate--tRNA ligase.